The following is a 31-amino-acid chain: Cytochrome b6-f complex subunit 6 (31 aa).

A helical transmembrane segment spans residues 4–26 (ITSYFGFLLAALTITSALLIGLN).

It belongs to the PetL family. As to quaternary structure, the 4 large subunits of the cytochrome b6-f complex are cytochrome b6, subunit IV (17 kDa polypeptide, PetD), cytochrome f and the Rieske protein, while the 4 small subunits are PetG, PetL, PetM and PetN. The complex functions as a dimer.

It is found in the plastid. The protein localises to the chloroplast thylakoid membrane. Component of the cytochrome b6-f complex, which mediates electron transfer between photosystem II (PSII) and photosystem I (PSI), cyclic electron flow around PSI, and state transitions. PetL is important for photoautotrophic growth as well as for electron transfer efficiency and stability of the cytochrome b6-f complex. The chain is Cytochrome b6-f complex subunit 6 from Amborella trichopoda.